The sequence spans 683 residues: MALLGRLLPLALALALGPAATHAGPAKSPYQLVLQHSRLRGRQHGPNVCAVQKLIGTNKKYFTNCKQWYQRKICGKSTVISYECCPGYEKVPGEKGCPAVLPLSNLYETLGVVGSTTTQLYTDRTEKLRPEMEGPGSFTIFAPSNEAWASLPAEVLDSLVSNVNIELLNALRYHMVDRRVLTDELKHGMALTSMYQNSNIQIHHYPNGIVTVNCARLLKADHHATNGVVHLIDKVISTVTNNIQQIIEIEDTFETLRAAVAASGLNTLLEGDGQYTLLAPSNEAFEKIPAETLNRILGDPEALRDLLNNHILKSAMCAEAIVAGLSLETLEGTTLEVGCSGDMLTINGKPIISNKDVLATNGVIHFIDELLIPDSAKTLFELAAESDVSTAVDLFRQAGLGSHLSGNERLTLLAPMNSVFKDGTPRIDARTKNLLLNHMIKDQLASKYLYHGQTLDTLGGKKLRVFVYRNSLCIENSCIAAHDKRGRYGTLFTMDRMLTPPMGTVMDVLKGDNRFSMLVAAIQSAGLTETLNREGVYTVFAPTNEAFQALPLGERNKLLGNAKELANILKYHVGDEILVSGGIGALVRLKSLQGDKLEVSSKNSLVTVNKEPVAEADIMATNGVVHTINTVLRPPANKPQERGDELADSALEIFKQASAFSRATQSSVKLAPVYQRLLERMKH.

The first 23 residues, 1-23, serve as a signal peptide directing secretion; the sequence is MALLGRLLPLALALALGPAATHA. A Phosphoserine modification is found at Ser-37. One can recognise an EMI domain in the interval 45 to 99; it reads GPNVCAVQKLIGTNKKYFTNCKQWYQRKICGKSTVISYECCPGYEKVPGEKGCPA. 5 cysteine pairs are disulfide-bonded: Cys-49-Cys-85, Cys-74-Cys-339, Cys-84-Cys-97, Cys-214-Cys-317, and Cys-473-Cys-478. An S-cysteinyl cysteine modification is found at Cys-65. 4 FAS1 domains span residues 103-236, 240-371, 375-498, and 502-632; these read LSNL…DKVI, TNNI…DELL, SAKT…DRML, and MGTV…NTVL. A Cell attachment site motif is present at residues 642–644; sequence RGD.

As to quaternary structure, binds to type I, II, and IV collagens. In terms of processing, gamma-carboxyglutamated; gamma-carboxyglutamate residues are formed by vitamin K dependent carboxylation; these residues may be required for binding to calcium. According to a report, does not contain any vitamin K-dependent gamma-carboxyglutamate residues. Post-translationally, the EMI domain contains 2 expected intradomain disulfide bridges (Cys-49-Cys85 and Cys-84-Cys-97) and one unusual interdomain disulfide bridge to the second FAS1 domain (Cys-74-Cys-339). This arrangement violates the predicted disulfide bridge pattern of an EMI domain. As to expression, widely distributed in various tissues except for the brain. High levels in corneal epithelium.

Its subcellular location is the secreted. The protein resides in the extracellular space. It localises to the extracellular matrix. Functionally, plays a role in cell adhesion. May play a role in cell-collagen interactions. This is Transforming growth factor-beta-induced protein ig-h3 (TGFBI) from Sus scrofa (Pig).